Reading from the N-terminus, the 1049-residue chain is Isoleucine--tRNA ligase (1049 aa).

Residues 48–58 (PYTTGRIHLGT) carry the 'HIGH' region motif. Positions 596–600 (KMSKS) match the 'KMSKS' region motif. Lys599 is an ATP binding site.

Belongs to the class-I aminoacyl-tRNA synthetase family. IleS type 2 subfamily. As to quaternary structure, monomer. It depends on Zn(2+) as a cofactor.

It is found in the cytoplasm. The catalysed reaction is tRNA(Ile) + L-isoleucine + ATP = L-isoleucyl-tRNA(Ile) + AMP + diphosphate. Functionally, catalyzes the attachment of isoleucine to tRNA(Ile). As IleRS can inadvertently accommodate and process structurally similar amino acids such as valine, to avoid such errors it has two additional distinct tRNA(Ile)-dependent editing activities. One activity is designated as 'pretransfer' editing and involves the hydrolysis of activated Val-AMP. The other activity is designated 'posttransfer' editing and involves deacylation of mischarged Val-tRNA(Ile). The protein is Isoleucine--tRNA ligase of Methanothrix thermoacetophila (strain DSM 6194 / JCM 14653 / NBRC 101360 / PT) (Methanosaeta thermophila).